A 645-amino-acid chain; its full sequence is 1,4-alpha-glucan branching enzyme GlgB (645 aa).

Residue aspartate 309 is the Nucleophile of the active site. The active-site Proton donor is the glutamate 352. The segment at 619-645 (VKTRKGSKKQDGSKTKVRSNVTSRGKR) is disordered. Positions 636-645 (RSNVTSRGKR) are enriched in polar residues.

Belongs to the glycosyl hydrolase 13 family. GlgB subfamily. Monomer.

The enzyme catalyses Transfers a segment of a (1-&gt;4)-alpha-D-glucan chain to a primary hydroxy group in a similar glucan chain.. Its pathway is glycan biosynthesis; glycogen biosynthesis. Its function is as follows. Catalyzes the formation of the alpha-1,6-glucosidic linkages in glycogen by scission of a 1,4-alpha-linked oligosaccharide from growing alpha-1,4-glucan chains and the subsequent attachment of the oligosaccharide to the alpha-1,6 position. The protein is 1,4-alpha-glucan branching enzyme GlgB of Bacillus cereus (strain ATCC 14579 / DSM 31 / CCUG 7414 / JCM 2152 / NBRC 15305 / NCIMB 9373 / NCTC 2599 / NRRL B-3711).